We begin with the raw amino-acid sequence, 307 residues long: MVNPTTSEVHPTMGVKIFSAGVAACLADIITFPLDTAKVRLQIQGEGQISSTIRYKGVLGTITTLAKTEGLPKLYSGLPAGIQRQISFASLRIGLYDTVQEYFSSGKETPPTLGNRISAGLMTGGVAVFIGQPTEVVKVRLQAQSHLHGIKPRYTGTYNAYRIIATTESFSTLWKGTTPNLLRNVIINCVELVTYDLMKGALVNNQILADDVPCHLLSAFVAGFCTTFLASPADVVKTRFINSLPGQYPSVPSCAMTMLTKEGPTAFFKGFVPSFLRLASWNVIMFVCFEQLKKELSKSRQTVDCTT.

Topologically, residues 2–10 are mitochondrial intermembrane; the sequence is VNPTTSEVH. The helical transmembrane segment at 11–32 threads the bilayer; that stretch reads PTMGVKIFSAGVAACLADIITF. Solcar repeat units follow at residues 11-102, 111-201, and 210-295; these read PTMG…VQEY, PTLG…MKGA, and DDVP…LKKE. Over 33–73 the chain is Mitochondrial matrix; sequence PLDTAKVRLQIQGEGQISSTIRYKGVLGTITTLAKTEGLPK. Lys56 provides a ligand contact to fatty acid 16:0. A helical membrane pass occupies residues 74–96; that stretch reads LYSGLPAGIQRQISFASLRIGLY. Residues 97 to 116 are Mitochondrial intermembrane-facing; sequence DTVQEYFSSGKETPPTLGNR. Residues 117 to 133 form a helical membrane-spanning segment; the sequence is ISAGLMTGGVAVFIGQP. The Mitochondrial matrix segment spans residues 134–178; sequence TEVVKVRLQAQSHLHGIKPRYTGTYNAYRIIATTESFSTLWKGTT. Residues 179–195 form a helical membrane-spanning segment; the sequence is PNLLRNVIINCVELVTY. The Mitochondrial intermembrane segment spans residues 196 to 212; it reads DLMKGALVNNQILADDV. The chain crosses the membrane as a helical span at residues 213–232; the sequence is PCHLLSAFVAGFCTTFLASP. Residues 233-266 lie on the Mitochondrial matrix side of the membrane; sequence ADVVKTRFINSLPGQYPSVPSCAMTMLTKEGPTA. Cys254 is subject to Cysteine sulfenic acid (-SOH). A helical transmembrane segment spans residues 267 to 289; it reads FFKGFVPSFLRLASWNVIMFVCF. Lys269 provides a ligand contact to fatty acid 16:0. Over 290 to 307 the chain is Mitochondrial intermembrane; the sequence is EQLKKELSKSRQTVDCTT.

This sequence belongs to the mitochondrial carrier (TC 2.A.29) family. Most probably functions as a monomer. Binds one purine nucleotide per monomer. However, has also been suggested to function as a homodimer or a homotetramer. Tightly associates with cardiolipin in the mitochondrion inner membrane; may stabilize and regulate its activity. Post-translationally, may undergo sulfenylation upon cold exposure. May increase the sensitivity of UCP1 thermogenic function to the activation by noradrenaline probably through structural effects. May undergo ubiquitin-mediated proteasomal degradation. Brown adipose tissue.

Its subcellular location is the mitochondrion inner membrane. It catalyses the reaction H(+)(in) = H(+)(out). Has no constitutive proton transporter activity and has to be activated by long-chain fatty acids/LCFAs. Inhibited by purine nucleotides. Both purine nucleotides and LCFAs bind the cytosolic side of the transporter and directly compete to activate or inhibit it. Activated by noradrenaline and reactive oxygen species. Despite lacking canonical translational encoding for selenocysteine, a small pool of the protein has been observed to selectively incorporate selenocysteine at 'Cys-254'. Selenocysteine-modified protein is highly sensitive to redox modification and may constitute a pool of protein highly sensitive to activation by elevated levels of reactive oxygen species (ROS). Its function is as follows. Mitochondrial protein responsible for thermogenic respiration, a specialized capacity of brown adipose tissue and beige fat that participates in non-shivering adaptive thermogenesis to temperature and diet variations and more generally to the regulation of energy balance. Functions as a long-chain fatty acid/LCFA and proton symporter, simultaneously transporting one LCFA and one proton through the inner mitochondrial membrane. However, LCFAs remaining associated with the transporter via their hydrophobic tails, it results in an apparent transport of protons activated by LCFAs. Thereby, dissipates the mitochondrial proton gradient and converts the energy of substrate oxydation into heat instead of ATP. Regulates the production of reactive oxygen species/ROS by mitochondria. This Mesocricetus auratus (Golden hamster) protein is Mitochondrial brown fat uncoupling protein 1.